Reading from the N-terminus, the 403-residue chain is S-arrestin (403 aa).

Threonine 231 carries the post-translational modification Phosphothreonine. Positions 381–403 are disordered; sequence RQNLKDTGENTEGKKDEDAGQDE.

It belongs to the arrestin family. As to quaternary structure, monomer. Homodimer. Homotetramer. Interacts with RHO (via the phosphorylated C-terminus). Retina and pineal gland.

It localises to the cell projection. The protein localises to the cilium. It is found in the photoreceptor outer segment. Its subcellular location is the membrane. In terms of biological role, binds to photoactivated, phosphorylated RHO and terminates RHO signaling via G-proteins by competing with G-proteins for the same binding site on RHO. May play a role in preventing light-dependent degeneration of retinal photoreceptor cells. This is S-arrestin (Sag) from Rattus norvegicus (Rat).